We begin with the raw amino-acid sequence, 270 residues long: UPF0162 protein PA3419 (270 aa).

The protein belongs to the UPF0162 family.

The chain is UPF0162 protein PA3419 from Pseudomonas aeruginosa (strain ATCC 15692 / DSM 22644 / CIP 104116 / JCM 14847 / LMG 12228 / 1C / PRS 101 / PAO1).